The sequence spans 31 residues: Cytochrome b6-f complex subunit 6 (31 aa).

A helical membrane pass occupies residues 4-24 (LTSYFGFLLAALTITPALFIG).

It belongs to the PetL family. The 4 large subunits of the cytochrome b6-f complex are cytochrome b6, subunit IV (17 kDa polypeptide, PetD), cytochrome f and the Rieske protein, while the 4 small subunits are PetG, PetL, PetM and PetN. The complex functions as a dimer.

Its subcellular location is the plastid. The protein resides in the chloroplast thylakoid membrane. Functionally, component of the cytochrome b6-f complex, which mediates electron transfer between photosystem II (PSII) and photosystem I (PSI), cyclic electron flow around PSI, and state transitions. PetL is important for photoautotrophic growth as well as for electron transfer efficiency and stability of the cytochrome b6-f complex. This chain is Cytochrome b6-f complex subunit 6, found in Agrostis stolonifera (Creeping bentgrass).